A 457-amino-acid chain; its full sequence is ATP synthase subunit beta (457 aa).

Residue glycine 147–threonine 154 participates in ATP binding.

It belongs to the ATPase alpha/beta chains family. In terms of assembly, F-type ATPases have 2 components, CF(1) - the catalytic core - and CF(0) - the membrane proton channel. CF(1) has five subunits: alpha(3), beta(3), gamma(1), delta(1), epsilon(1). CF(0) has three main subunits: a(1), b(2) and c(9-12). The alpha and beta chains form an alternating ring which encloses part of the gamma chain. CF(1) is attached to CF(0) by a central stalk formed by the gamma and epsilon chains, while a peripheral stalk is formed by the delta and b chains.

The protein localises to the cell inner membrane. The catalysed reaction is ATP + H2O + 4 H(+)(in) = ADP + phosphate + 5 H(+)(out). Functionally, produces ATP from ADP in the presence of a proton gradient across the membrane. The catalytic sites are hosted primarily by the beta subunits. The sequence is that of ATP synthase subunit beta from Actinobacillus pleuropneumoniae serotype 3 (strain JL03).